A 94-amino-acid polypeptide reads, in one-letter code: Aspartyl/glutamyl-tRNA(Asn/Gln) amidotransferase subunit C (94 aa).

Belongs to the GatC family. In terms of assembly, heterotrimer of A, B and C subunits.

It carries out the reaction L-glutamyl-tRNA(Gln) + L-glutamine + ATP + H2O = L-glutaminyl-tRNA(Gln) + L-glutamate + ADP + phosphate + H(+). It catalyses the reaction L-aspartyl-tRNA(Asn) + L-glutamine + ATP + H2O = L-asparaginyl-tRNA(Asn) + L-glutamate + ADP + phosphate + 2 H(+). Its function is as follows. Allows the formation of correctly charged Asn-tRNA(Asn) or Gln-tRNA(Gln) through the transamidation of misacylated Asp-tRNA(Asn) or Glu-tRNA(Gln) in organisms which lack either or both of asparaginyl-tRNA or glutaminyl-tRNA synthetases. The reaction takes place in the presence of glutamine and ATP through an activated phospho-Asp-tRNA(Asn) or phospho-Glu-tRNA(Gln). This chain is Aspartyl/glutamyl-tRNA(Asn/Gln) amidotransferase subunit C, found in Desulfitobacterium hafniense (strain DSM 10664 / DCB-2).